Here is a 114-residue protein sequence, read N- to C-terminus: Amphinase-1 (114 aa).

The Proton acceptor role is filled by His15. Cystine bridges form between Cys26–Cys79, Cys41–Cys85, Cys59–Cys100, and Cys97–Cys114. N-linked (GlcNAc...) asparagine glycosylation is present at Asn27. A substrate-binding site is contributed by 42-46 (KPVNT). N-linked (GlcNAc...) asparagine glycans are attached at residues Asn67 and Asn91. His107 functions as the Proton donor in the catalytic mechanism.

It belongs to the pancreatic ribonuclease family. Monomer. Post-translationally, there are at least five different forms arising from glycan heterogeneity.

Its subcellular location is the secreted. Functionally, endonuclease, hydrolyzes highly polymerized RNA, poly(U) and poly(C), and the dinucleotides CpA and UpA. More active towards rCA than rUA or rUG. Has cytotoxic activity against cultured human submaxillary gland carcinoma cells. The sequence is that of Amphinase-1 from Lithobates pipiens (Northern leopard frog).